The primary structure comprises 130 residues: Small ribosomal subunit protein uS9 (130 aa).

Residues 111 to 130 (VERKKPGLKKARKASQFSKR) are disordered. The span at 116-130 (PGLKKARKASQFSKR) shows a compositional bias: basic residues.

This sequence belongs to the universal ribosomal protein uS9 family.

The protein is Small ribosomal subunit protein uS9 of Lactococcus lactis subsp. lactis (strain IL1403) (Streptococcus lactis).